The chain runs to 131 residues: uncharacterized protein (131 aa).

Residues 64–81 (VNCDKCGKPGNVKNDCPG) form a CCHC-type; degenerate zinc finger.

This is an uncharacterized protein from Homo sapiens (Human).